The chain runs to 136 residues: MGSETLSVIQVRLQNIYDNDKVALLKITCNTNRLILLTHTLAKSVIHTIKLNGTVFLHIVTSSDFCPTSDIIESANFTTMPVLQNGGYIWELIELTHCFQTNGLIDDNCEVTFSKRLSDSELEKYSSQLSDLLGLN.

The protein belongs to the pneumovirus non-structural protein 1 family. Monomer. Homomultimer. Heteromultimer with NS2. Interacts with the matrix protein M. Interacts with host ELOC and CUL2; this interaction allows NS1 to form an active E3 ligase with ELOC and CUL2. Interacts with host IRF3; this interaction leads to the disrupted association of IRF3 with CREBBP and thus reduced binding of IRF3 to the IFN-beta promoter. Interacts with host MAVS; this interaction prevents MAVS binding to RIGI and inhibits signaling pathway leading to interferon production. Interacts with host TRIM25 (via SPRY domain); this interaction suppresses RIGI ubiquitination and results in decreased interaction between RIGI and MAVS.

Its subcellular location is the host cytoplasm. It is found in the host mitochondrion. It localises to the host nucleus. Its function is as follows. Plays a major role in antagonizing the type I IFN-mediated antiviral response by degrading or inhibiting multiple cellular factors required for either IFN induction or response pathways. Acts cooperatively with NS2 to repress activation and nuclear translocation of host IFN-regulatory factor IRF3. Also disrupts the association of IRF3 with CREBBP. Interacts with host mitochondrial-associated membrane (MAM) MAVS and prevents the interaction with RIGI. Interacts with TRIM25 to suppress TRIM25-mediated RIGI ubiquitination and thereby RIGI-MAVS interaction. Together with NS2, participates in the proteasomal degradation of host STAT2, IRF3, IRF7, TBK1 and RIGI through a NS-degradasome involving CUL2 and Elongin-C. The degradasome requires an intact mitochondrial MAVS. Decreases the levels of host TRAF3 and IKBKE/IKK-epsilon. As functions other than disruptions of the type I IFN-mediated antiviral signaling pathways, induces host SOCS1 and SOCS3 expression. Suppresses premature apoptosis by an NF-kappa-B-dependent, interferon-independent mechanism and thus facilitates virus growth. Additionally, NS1 may serve some inhibitory role in viral transcription and RNA replication. Suppresses proliferation and activation of host CD103+ CD8+ cytotoxic T-lymphocytes and Th17 helper T-lymphocytes. This chain is Non-structural protein 1 (1C), found in Ovis aries (Sheep).